Consider the following 718-residue polypeptide: Telomeric repeat-binding factor 2 (718 aa).

Disordered stretches follow at residues 1-22 (MAAK…RSDD) and 219-286 (NSER…GAPE). 2 stretches are compositionally biased toward basic and acidic residues: residues 8–22 (AAME…RSDD) and 219–228 (NSERAEEPKR). Residues 24–220 (EQAVNRWVLQ…LVTMMKSLNS (197 aa)) are TRFH dimerization. 15 tandem repeats follow at residues 257–269 (GTLR…GGVA), 270–282 (GAPS…KDPT), 283–295 (GAPE…KDAV), 296–308 (RAPC…EDSQ), 309–321 (GTPR…RDVM), 322–334 (GAPS…KDLL), 335–347 (GAPK…RDVV), 348–360 (RAPS…KDPV), 361–373 (GTPG…RDVA), 374–386 (RAPS…KNLP), 387–399 (GAPE…KNTV), 400–412 (RAPS…KDLV), 413–425 (RAPK…RDVV), 426–438 (RAPS…KDTA), and 439–451 (GASE…SYPT). Residues 257-451 (GTLRRAETAG…EPMKSASYPT (195 aa)) form a 15 X 13 AA approximate tandem repeats region. Disordered stretches follow at residues 342 to 455 (TARD…ASQP) and 524 to 641 (FNKL…WSDE). A compositionally biased stretch (basic and acidic residues) spans 405–425 (AERRKDLVRAPKRAETARDVV). Polar residues predominate over residues 533–543 (PSPQQMSPSVS). The Nuclear localization signal signature appears at 545 to 550 (RTKRRK). Over residues 584–595 (SQCSKSSESPDS) the composition is skewed to low complexity. Residues 615-630 (PVSTKRSSQQRWNSSY) show a composition bias toward polar residues. Residues 664–717 (KKQKWTVQESEWIKDGVRKYGEGRWKTISEKYPFQNRTSVQIKDRYRTMKKLGI) form the HTH myb-type domain. The segment at residues 688 to 713 (WKTISEKYPFQNRTSVQIKDRYRTMK) is a DNA-binding region (H-T-H motif).

Homodimer. Component of the shelterin complex (telosome). Interacts with TERF2IP/RAP1. As to expression, highly expressed in embryo.

The protein localises to the nucleus. The protein resides in the chromosome. Its subcellular location is the telomere. In terms of biological role, binds the telomeric double-stranded 5'-TTAGGG-3' repeat and plays a central role in telomere maintenance and protection against end-to-end fusion of chromosomes. In addition to its telomeric DNA-binding role, required to recruit a number of factors and enzymes required for telomere protection, including the shelterin complex, TERF2IP/RAP1 and DCLRE1B/Apollo. Component of the shelterin complex (telosome) that is involved in the regulation of telomere length and protection. Shelterin associates with arrays of double-stranded 5'-TTAGGG-3' repeats added by telomerase and protects chromosome ends; without its protective activity, telomeres are no longer hidden from the DNA damage surveillance and chromosome ends are inappropriately processed by DNA repair pathways. Together with DCLRE1B/Apollo, plays a key role in telomeric loop (T loop) formation by generating 3' single-stranded overhang at the leading end telomeres: T loops have been proposed to protect chromosome ends from degradation and repair. Required both to recruit DCLRE1B/Apollo to telomeres and activate the exonuclease activity of DCLRE1B/Apollo. Together with DCLRE1B/Apollo, required to control the amount of DNA topoisomerase (TOP1, TOP2A and TOP2B) needed for telomere replication during fork passage and prevent aberrant telomere topology. Recruits TERF2IP/RAP1 to telomeres, thereby participating in to repressing homology-directed repair (HDR), which can affect telomere length. In Gallus gallus (Chicken), this protein is Telomeric repeat-binding factor 2 (TERF2).